The following is a 284-amino-acid chain: Sulfotransferase 4A1 (284 aa).

Phosphothreonine occurs at positions 8, 11, and 205.

The protein belongs to the sulfotransferase 1 family. In terms of tissue distribution, expressed in brain, cerebellum and hypothalamus. Not detected in pancreas, liver, lung, intestine, kidney, uterus, adrenal gland, thymus, spleen, epididymis, testicle, and heart.

The protein localises to the cytoplasm. In terms of biological role, atypical sulfotransferase family member with very low affinity for 3'-phospho-5'-adenylyl sulfate (PAPS) and very low catalytic activity towards L-triiodothyronine, thyroxine, estrone, p-nitrophenol, 2-naphthylamine, and 2-beta-naphthol. May have a role in the metabolism of drugs and neurotransmitters in the CNS. The polypeptide is Sulfotransferase 4A1 (Sult4a1) (Mus musculus (Mouse)).